A 148-amino-acid polypeptide reads, in one-letter code: 3-hydroxyacyl-[acyl-carrier-protein] dehydratase FabZ (148 aa).

The active site involves His-48.

The protein belongs to the thioester dehydratase family. FabZ subfamily.

Its subcellular location is the cytoplasm. It carries out the reaction a (3R)-hydroxyacyl-[ACP] = a (2E)-enoyl-[ACP] + H2O. Functionally, involved in unsaturated fatty acids biosynthesis. Catalyzes the dehydration of short chain beta-hydroxyacyl-ACPs and long chain saturated and unsaturated beta-hydroxyacyl-ACPs. This is 3-hydroxyacyl-[acyl-carrier-protein] dehydratase FabZ from Nitratiruptor sp. (strain SB155-2).